Consider the following 144-residue polypeptide: Small ribosomal subunit protein bS6 (144 aa).

Residues 99-144 (KASPLAPCEEKGEEGKAEDAADELTTFGMADDDDLGDDDDTVEAGI) are disordered. The segment covering 106–117 (CEEKGEEGKAED) has biased composition (basic and acidic residues). Positions 128-144 (ADDDDLGDDDDTVEAGI) are enriched in acidic residues.

The protein belongs to the bacterial ribosomal protein bS6 family.

Its function is as follows. Binds together with bS18 to 16S ribosomal RNA. The sequence is that of Small ribosomal subunit protein bS6 from Magnetococcus marinus (strain ATCC BAA-1437 / JCM 17883 / MC-1).